The sequence spans 420 residues: WD repeat-containing protein jip5 (420 aa).

WD repeat units lie at residues 9-48 (PLSADLFSQALHPKEPVVSVGLSSGHVQTFRLPSDEVDSD), 72-111 (RHKGSCRCLGFGVDGEMLYSAGTDGLVKAAKAETGVVENK), 117-158 (DKNG…SKVS), 221-262 (VSSV…DQDE), 271-314 (GGGE…VVSE), and 318-355 (DETEGVVGLGFDVEGRMVSGGGQIVKVWHEAVDSGDGV). A disordered region spans residues 39-63 (RLPSDEVDSDDDGASTSSSRTGRGH). The segment at 350 to 420 (DSGDGVNGNE…QAVMAFHDLD (71 aa)) is disordered. The span at 368–387 (DDSDEDSDDGDDDDDSGDSD) shows a compositional bias: acidic residues. Over residues 394–406 (DARKKRKKGKTPK) the composition is skewed to basic residues.

Belongs to the WD repeat WDR55 family.

It localises to the nucleus. The protein localises to the nucleolus. The chain is WD repeat-containing protein jip5 (jip5) from Aspergillus terreus (strain NIH 2624 / FGSC A1156).